Here is a 236-residue protein sequence, read N- to C-terminus: Transcriptional regulatory protein RprY (236 aa).

In terms of domain architecture, Response regulatory spans 9–123 (RILLCEDDEN…ELTFRIEAIL (115 aa)). Asp58 is subject to 4-aspartylphosphate. A DNA-binding region (ompR/PhoB-type) is located at residues 134 to 231 (SNVYKIGKFT…IHGKGYKLIT (98 aa)).

In terms of processing, phosphorylated by RprX.

The protein resides in the cytoplasm. Member of the two-component regulatory system RprX/RprY. The sequence is that of Transcriptional regulatory protein RprY (rprY) from Bacteroides fragilis (strain YCH46).